The following is a 315-amino-acid chain: Homoserine kinase (315 aa).

An ATP-binding site is contributed by 97 to 107 (PPARGLGSSAT).

This sequence belongs to the GHMP kinase family. Homoserine kinase subfamily.

It is found in the cytoplasm. It carries out the reaction L-homoserine + ATP = O-phospho-L-homoserine + ADP + H(+). The protein operates within amino-acid biosynthesis; L-threonine biosynthesis; L-threonine from L-aspartate: step 4/5. Catalyzes the ATP-dependent phosphorylation of L-homoserine to L-homoserine phosphate. The sequence is that of Homoserine kinase from Synechococcus sp. (strain WH7803).